The chain runs to 162 residues: Caveolin-2 (162 aa).

Residues Met-1–Lys-86 are Cytoplasmic-facing. Tyr-19 is subject to Phosphotyrosine; by SRC. 2 positions are modified to phosphoserine: Ser-20 and Ser-23. A Phosphotyrosine modification is found at Tyr-27. Ser-36 is subject to Phosphoserine. Positions Phe-87 to Leu-107 form an intramembrane region, helical. The Cytoplasmic portion of the chain corresponds to Ser-108–Asp-162.

Belongs to the caveolin family. In terms of assembly, monomer or homodimer. Interacts with CAV1; the interaction forms a stable heterooligomeric complex that is required for targeting to lipid rafts and for caveolae formation. Tyrosine phosphorylated forms do not form heterooligomers with the Tyr-19-phosphorylated form existing as a monomer or dimer, and the Tyr-27-form as a monomer only. Interacts (tyrosine phosphorylated form) with the SH2 domain-containing proteins, RASA1, NCK1 and SRC. Interacts (tyrosine phosphorylated form) with INSR, the interaction (Tyr-27-phosphorylated form) is increased on insulin stimulation. Interacts (Tyr-19 phosphorylated form) with MAPK1 (phosphorylated form); the interaction, promoted by insulin, leads to nuclear location and MAPK1 activation. Interacts with STAT3; the interaction is increased on insulin-induced tyrosine phosphorylation leading to STAT activation. In terms of processing, phosphorylated on serine and tyrosine residues. CAV1 promotes phosphorylation on Ser-23 which then targets the complex to the plasma membrane, lipid rafts and caveolae. Phosphorylation on Ser-36 appears to modulate mitosis in endothelial cells. Phosphorylation on both Tyr-19 and Tyr-27 is required for insulin-induced 'Ser-727' phosphorylation of STAT3 and its activation. Phosphorylation on Tyr-19 is required for insulin-induced phosphorylation of MAPK1 and DNA binding of STAT3. Tyrosine phosphorylation is induced by both EGF and insulin.

The protein localises to the nucleus. The protein resides in the cytoplasm. It localises to the golgi apparatus membrane. It is found in the cell membrane. Its subcellular location is the membrane. The protein localises to the caveola. May act as a scaffolding protein within caveolar membranes. Interacts directly with G-protein alpha subunits and can functionally regulate their activity. Acts as an accessory protein in conjunction with CAV1 in targeting to lipid rafts and driving caveolae formation. The Ser-36 phosphorylated form has a role in modulating mitosis in endothelial cells. Positive regulator of cellular mitogenesis of the MAPK signaling pathway. Required for the insulin-stimulated nuclear translocation and activation of MAPK1 and STAT3, and the subsequent regulation of cell cycle progression. The polypeptide is Caveolin-2 (Cav2) (Mus musculus (Mouse)).